The primary structure comprises 239 residues: Dephospho-CoA kinase (239 aa).

In terms of domain architecture, DPCK spans 3–206; sequence IIGLTGSIAS…GGEGGEPAAG (204 aa). 11 to 16 lines the ATP pocket; it reads ASGKST. Residues 197–239 are disordered; the sequence is GGEGGEPAAGSSAHHGAGSVDPGAGPCDGPGAAPEAERRGGDR. Low complexity predominate over residues 204–230; the sequence is AAGSSAHHGAGSVDPGAGPCDGPGAAP.

This sequence belongs to the CoaE family.

It is found in the cytoplasm. It carries out the reaction 3'-dephospho-CoA + ATP = ADP + CoA + H(+). The protein operates within cofactor biosynthesis; coenzyme A biosynthesis; CoA from (R)-pantothenate: step 5/5. Catalyzes the phosphorylation of the 3'-hydroxyl group of dephosphocoenzyme A to form coenzyme A. The protein is Dephospho-CoA kinase of Symbiobacterium thermophilum (strain DSM 24528 / JCM 14929 / IAM 14863 / T).